The primary structure comprises 1469 residues: Protein BCL9 homolog (1469 aa).

Positions 1–16 (MLSTTMPRSPTQQQPQ) are enriched in polar residues. Disordered regions lie at residues 1–131 (MLST…NVSA), 161–187 (SNKA…KEEP), 200–222 (EERE…NAQD), 422–442 (ENSK…QSDP), and 454–474 (GGSS…DSIS). At serine 9 the chain carries Phosphoserine. At threonine 11 the chain carries Phosphothreonine. The span at 17-34 (PNSDASSTSASGSNPGAA) shows a compositional bias: low complexity. Composition is skewed to polar residues over residues 40-60 (SAAS…TLSP) and 90-113 (SGNN…NSCL). Residues 116 to 130 (SPQNSSEHSNSSNVS) are compositionally biased toward low complexity. A Phosphoserine modification is found at serine 206. At threonine 208 the chain carries Phosphothreonine. At serine 210 the chain carries Phosphoserine. 2 stretches are compositionally biased toward polar residues: residues 422 to 438 (ENSK…SFVD) and 455 to 474 (GSSN…DSIS). The tract at residues 511–555 (SLQGVKVPDENLTPQQRQHREEQLAKIKKMNQFLFPENENSVGAN) is ARM-binding. Disordered regions lie at residues 728–830 (GGKP…TSTV), 844–913 (CFQA…RSPV), and 961–991 (QASA…PPPN). Over residues 731–745 (PRQVTGTVVPQQQTP) the composition is skewed to low complexity. Positions 770-781 (IQRSASVPIATQ) are enriched in polar residues. The segment covering 782-796 (SPNPSSPNNLSLPSP) has biased composition (low complexity). 2 stretches are compositionally biased toward polar residues: residues 806-830 (PTNS…TSTV) and 844-880 (CFQA…TPLS). 3 positions are modified to phosphoserine: serine 883, serine 905, and serine 911. Positions 904-913 (PSPQGQRSPV) are enriched in polar residues.

Belongs to the BCL9 family. In terms of assembly, binds to ARM and PYGO.

Its subcellular location is the nucleus. Involved in signal transduction through the Wnt pathway. In Drosophila melanogaster (Fruit fly), this protein is Protein BCL9 homolog (lgs).